The chain runs to 128 residues: NHP2-like protein 1 (128 aa).

The interval 36 to 48 (RKGANEATKTLNR) is interaction with U4 snRNA and U4atac snRNA. Residues 96-128 (SRPVIACSVTIKEGSQLKPQIQSVQQAIERLLV) are important for U4 snRNA-binding.

The protein belongs to the eukaryotic ribosomal protein eL8 family. Identified in the spliceosome B complex. Component of the U4/U6-U5 tri-snRNP complex. Part of the small subunit (SSU) processome, composed of more than 70 proteins and the RNA chaperone small nucleolar RNA (snoRNA) U3.

Its subcellular location is the nucleus. The protein resides in the nucleolus. In terms of biological role, part of the small subunit (SSU) processome, first precursor of the small eukaryotic ribosomal subunit. During the assembly of the SSU processome in the nucleolus, many ribosome biogenesis factors, an RNA chaperone and ribosomal proteins associate with the nascent pre-rRNA and work in concert to generate RNA folding, modifications, rearrangements and cleavage as well as targeted degradation of pre-ribosomal RNA by the RNA exosome. Involved in pre-mRNA splicing as component of the spliceosome. Binds to the 5'-stem-loop of U4 snRNA and thereby contributes to spliceosome assembly. The protein undergoes a conformational change upon RNA-binding. Core component of box C/D small nucleolar ribonucleoprotein (snoRNP) complexes that function in methylation of multiple sites on ribosomal RNAs (rRNAs) and messenger RNAs (mRNAs). The sequence is that of NHP2-like protein 1 from Xenopus laevis (African clawed frog).